Consider the following 164-residue polypeptide: R-phycoerythrin alpha chain (164 aa).

Residues cysteine 82 and cysteine 139 each coordinate (2R,3E)-phycoerythrobilin.

Belongs to the phycobiliprotein family. As to quaternary structure, heterodimer of an alpha and a beta chain. Post-translationally, contains two covalently linked bilin chromophores.

Its subcellular location is the plastid. It localises to the chloroplast thylakoid membrane. Its function is as follows. Light-harvesting photosynthetic bile pigment-protein from the phycobiliprotein complex. This Porphyra purpurea (Red seaweed) protein is R-phycoerythrin alpha chain (cpeA).